A 470-amino-acid chain; its full sequence is Sorting nexin-17 (470 aa).

The PX domain maps to 1–109 (MHFSIPETES…SFLRRAQQET (109 aa)). A 1,2-diacyl-sn-glycero-3-phospho-(1D-myo-inositol-3-phosphate)-binding residues include Arg-36, Ser-38, Lys-62, and Arg-75. The Ras-associating domain occupies 115 to 206 (EEVSLEVLLS…YKIVLRKSYW (92 aa)). The segment at 115–432 (EEVSLEVLLS…DATRESMVKL (318 aa)) is FERM-like. The segment at 270–432 (GYLRFDACVA…DATRESMVKL (163 aa)) is PTB-like F3 module. Residues Ser-336, Ser-407, Ser-409, Ser-415, Ser-421, Ser-437, and Ser-440 each carry the phosphoserine modification. Residues 401-426 (GGTLRRSDSQQAVKSPPLLESPDATR) are disordered. The interval 458 to 470 (GNFAFEGIGDEDL) is interacts with the retriever complex.

Belongs to the sorting nexin family. Monomer. Interacts with APP (via cytoplasmic YXNPXY motif). Interacts with KIF1B. Interacts with the C-termini of P-selectin, PTC, LDLR, VLDLR, LRP1 and LRP8. Interacts with KRIT1 (via N-terminus). Interacts with HRAS. Interacts with ITGB1 and ITGB5 (via NPxY motif). Interacts with CCDC22 and CCDC93; the interaction associates SNX17 with the CCC complex. Interacts (via C-terminus) with VPS26C and VPS35L; the interactions are direct and associate SNX17 with the retriever complex.

It is found in the cytoplasm. It localises to the early endosome. The protein localises to the cytoplasmic vesicle membrane. In terms of biological role, critical regulator of endosomal recycling of numerous surface proteins, including integrins, signaling receptor and channels. Binds to NPxY sequences in the cytoplasmic tails of target cargos. Associates with retriever and CCC complexes to prevent lysosomal degradation and promote cell surface recycling of numerous cargos such as integrins ITGB1, ITGB5 and their associated alpha subunits. Also required for maintenance of normal cell surface levels of APP and LRP1. Interacts with membranes containing phosphatidylinositol 3-phosphate (PtdIns(3P)). This chain is Sorting nexin-17 (SNX17), found in Homo sapiens (Human).